Reading from the N-terminus, the 369-residue chain is Adenosine 3'-phospho 5'-phosphosulfate transporter 2 (369 aa).

An N-linked (GlcNAc...) asparagine glycan is attached at asparagine 39. 6 helical membrane passes run 46 to 66 (LTQF…YGYL), 79 to 99 (YGWY…LIEL), 115 to 135 (MLIA…LGYL), 138 to 158 (PTQV…GVFI), 168 to 188 (VSAA…DSTI), and 191 to 211 (NFNL…AVIG). N-linked (GlcNAc...) asparagine glycosylation is present at asparagine 222. Transmembrane regions (helical) follow at residues 235 to 255 (IGFV…PAVA), 266 to 285 (GYAF…VLAL), 292 to 314 (LLAV…LFFA), and 317 to 337 (FTFQ…LNVY).

This sequence belongs to the nucleotide-sugar transporter family. SLC35B subfamily.

Its subcellular location is the golgi apparatus membrane. The catalysed reaction is 3'-phosphoadenylyl sulfate(in) + adenosine 3',5'-bisphosphate(out) = 3'-phosphoadenylyl sulfate(out) + adenosine 3',5'-bisphosphate(in). In terms of biological role, probably functions as a 3'-phosphoadenylyl sulfate:adenosine 3',5'-bisphosphate antiporter at the Golgi membranes. Mediates the transport from the cytosol into the lumen of the Golgi of 3'-phosphoadenylyl sulfate/adenosine 3'-phospho 5'-phosphosulfate (PAPS), a universal sulfuryl donor for sulfation events that take place in that compartment. The polypeptide is Adenosine 3'-phospho 5'-phosphosulfate transporter 2 (Mus musculus (Mouse)).